Consider the following 209-residue polypeptide: MTRTLKPLILNTSALTLTLILIYTGISAHDKLTWLMEVTPVIIVVQLLLATARRYPLTPLLYTLIFLHAIILMVGGQYTYAKVPVGFEVQEWLGLSRNPYDKLGHFFQGLVPALVAREILVRGMYVRGRKMVAFLVCCVALAISAMYELIEWWAALAMGQGADDFLGTQGDQWDTQSDMFCALLGALTTVIFLARFHCRQLRRFGLITG.

Over 1–7 the chain is Periplasmic; sequence MTRTLKP. A helical membrane pass occupies residues 8–28; sequence LILNTSALTLTLILIYTGISA. At 29–31 the chain is on the cytoplasmic side; that stretch reads HDK. A helical membrane pass occupies residues 32–52; that stretch reads LTWLMEVTPVIIVVQLLLATA. The Periplasmic segment spans residues 53–55; it reads RRY. The helical transmembrane segment at 56–76 threads the bilayer; it reads PLTPLLYTLIFLHAIILMVGG. Over 77 to 131 the chain is Cytoplasmic; that stretch reads QYTYAKVPVGFEVQEWLGLSRNPYDKLGHFFQGLVPALVAREILVRGMYVRGRKM. A helical transmembrane segment spans residues 132-152; the sequence is VAFLVCCVALAISAMYELIEW. Residues 153-177 are Periplasmic-facing; sequence WAALAMGQGADDFLGTQGDQWDTQS. A helical membrane pass occupies residues 178-198; sequence DMFCALLGALTTVIFLARFHC. Residues 199-209 lie on the Cytoplasmic side of the membrane; sequence RQLRRFGLITG.

It is found in the cell inner membrane. The polypeptide is Inner membrane protein YjdF (yjdF) (Escherichia coli (strain K12)).